The sequence spans 511 residues: S-layer protein B (511 aa).

Residues 1-24 (MVKYMNLIVLGMLMFGVFVTLSLG) form the signal peptide. A coiled-coil region spans residues 358-392 (IQRLQSEVSVLESEVDQLKVEIQSLNETLTLQASE). A helical transmembrane segment spans residues 487–507 (GGIILGVIALIIAIVAVVLVF).

The protein belongs to the Sulfolobales SlaB family. In terms of assembly, the mushroom-shaped unit cells of the Sulfolobales' S-layers may consist of three SlaB subunits and six SlaA subunits.

The protein localises to the secreted. Its subcellular location is the cell wall. The protein resides in the S-layer. It localises to the cell membrane. In terms of biological role, S-layer small protein. May anchor the complex to the cell membrane. The polypeptide is S-layer protein B (Acidianus ambivalens (Desulfurolobus ambivalens)).